A 354-amino-acid chain; its full sequence is Methionine import ATP-binding protein MetN (354 aa).

Residues 8–250 (LDHIDITFRQ…PKEALTQEFI (243 aa)) enclose the ABC transporter domain. 42–49 (GYSGAGKS) contributes to the ATP binding site.

Belongs to the ABC transporter superfamily. Methionine importer (TC 3.A.1.24) family. In terms of assembly, the complex is composed of two ATP-binding proteins (MetN), two transmembrane proteins (MetI) and a solute-binding protein (MetQ).

The protein localises to the cell membrane. The catalysed reaction is L-methionine(out) + ATP + H2O = L-methionine(in) + ADP + phosphate + H(+). It carries out the reaction D-methionine(out) + ATP + H2O = D-methionine(in) + ADP + phosphate + H(+). Part of the ABC transporter complex MetNIQ involved in methionine import. Responsible for energy coupling to the transport system. In Streptococcus pyogenes serotype M12 (strain MGAS2096), this protein is Methionine import ATP-binding protein MetN.